Consider the following 297-residue polypeptide: Probable endonuclease 4 (297 aa).

Zn(2+)-binding residues include His-69, His-110, Glu-145, Asp-179, His-182, His-214, Asp-227, His-229, and Glu-259.

Belongs to the AP endonuclease 2 family. Zn(2+) is required as a cofactor.

The enzyme catalyses Endonucleolytic cleavage to 5'-phosphooligonucleotide end-products.. Its function is as follows. Endonuclease IV plays a role in DNA repair. It cleaves phosphodiester bonds at apurinic or apyrimidinic (AP) sites, generating a 3'-hydroxyl group and a 5'-terminal sugar phosphate. In Bacillus licheniformis (strain ATCC 14580 / DSM 13 / JCM 2505 / CCUG 7422 / NBRC 12200 / NCIMB 9375 / NCTC 10341 / NRRL NRS-1264 / Gibson 46), this protein is Probable endonuclease 4.